A 179-amino-acid polypeptide reads, in one-letter code: DELTA-miturgitoxin-Cp2a (179 aa).

The first 20 residues, Met1–Ser20, serve as a signal peptide directing secretion. Residues Glu21–Arg47 constitute a propeptide that is removed on maturation. The short motif at Glu44 to Arg47 is the Processing quadruplet motif element. 8 disulfide bridges follow: Cys51–Cys66, Cys58–Cys75, Cys65–Cys88, Cys77–Cys86, Cys115–Cys130, Cys122–Cys139, Cys129–Cys158, and Cys141–Cys156. Val178 is modified (valine amide).

The protein belongs to the spider toxin CSTX family. Double-CSTX subfamily. Post-translationally, cleavage of the propeptide depends on the processing quadruplet motif (XXXR, with at least one of X being E). Expressed by the venom gland.

The protein localises to the secreted. Spider venom toxin that exhibits cytolytic activity by forming an alpha-helix across the membrane. Lethal to insect larvae. This chain is DELTA-miturgitoxin-Cp2a, found in Cheiracanthium punctorium (Yellow sac spider).